A 342-amino-acid polypeptide reads, in one-letter code: tRNA N6-adenosine threonylcarbamoyltransferase (342 aa).

Fe cation contacts are provided by His114 and His118. Residues 136 to 140 (LVSGG), Asp169, Gly182, Asp186, and Asn275 each bind substrate. Fe cation is bound at residue Asp301.

The protein belongs to the KAE1 / TsaD family. Fe(2+) serves as cofactor.

The protein resides in the cytoplasm. It catalyses the reaction L-threonylcarbamoyladenylate + adenosine(37) in tRNA = N(6)-L-threonylcarbamoyladenosine(37) in tRNA + AMP + H(+). Functionally, required for the formation of a threonylcarbamoyl group on adenosine at position 37 (t(6)A37) in tRNAs that read codons beginning with adenine. Is involved in the transfer of the threonylcarbamoyl moiety of threonylcarbamoyl-AMP (TC-AMP) to the N6 group of A37, together with TsaE and TsaB. TsaD likely plays a direct catalytic role in this reaction. In Streptococcus pyogenes serotype M2 (strain MGAS10270), this protein is tRNA N6-adenosine threonylcarbamoyltransferase.